Consider the following 92-residue polypeptide: MGRSLKKGPFIADSLLKKVEKQNTDNDKSVIKTWSRSSTILPLMIGHTIAVHNGKTHIPVFITEQMIGHKLGEFAPTRTYRGHIRDKKGAKS.

The protein belongs to the universal ribosomal protein uS19 family.

Protein S19 forms a complex with S13 that binds strongly to the 16S ribosomal RNA. The protein is Small ribosomal subunit protein uS19 of Prochlorococcus marinus (strain MIT 9301).